The sequence spans 315 residues: tRNA dimethylallyltransferase (315 aa).

Residue 11 to 18 (GPTASGKS) participates in ATP binding. 13–18 (TASGKS) serves as a coordination point for substrate. Interaction with substrate tRNA stretches follow at residues 36–39 (DSMQ) and 160–164 (QRLIR).

The protein belongs to the IPP transferase family. Monomer. The cofactor is Mg(2+).

It catalyses the reaction adenosine(37) in tRNA + dimethylallyl diphosphate = N(6)-dimethylallyladenosine(37) in tRNA + diphosphate. Its function is as follows. Catalyzes the transfer of a dimethylallyl group onto the adenine at position 37 in tRNAs that read codons beginning with uridine, leading to the formation of N6-(dimethylallyl)adenosine (i(6)A). In Rickettsia bellii (strain RML369-C), this protein is tRNA dimethylallyltransferase.